A 287-amino-acid chain; its full sequence is Lipoyl synthase (287 aa).

Residues C34, C39, C45, C60, C64, C67, and S273 each coordinate [4Fe-4S] cluster. Residues 46-262 enclose the Radical SAM core domain; sequence WNKRHATVMI…KYIAYSKGFL (217 aa).

The protein belongs to the radical SAM superfamily. Lipoyl synthase family. [4Fe-4S] cluster is required as a cofactor.

It localises to the cytoplasm. The catalysed reaction is [[Fe-S] cluster scaffold protein carrying a second [4Fe-4S](2+) cluster] + N(6)-octanoyl-L-lysyl-[protein] + 2 oxidized [2Fe-2S]-[ferredoxin] + 2 S-adenosyl-L-methionine + 4 H(+) = [[Fe-S] cluster scaffold protein] + N(6)-[(R)-dihydrolipoyl]-L-lysyl-[protein] + 4 Fe(3+) + 2 hydrogen sulfide + 2 5'-deoxyadenosine + 2 L-methionine + 2 reduced [2Fe-2S]-[ferredoxin]. Its pathway is protein modification; protein lipoylation via endogenous pathway; protein N(6)-(lipoyl)lysine from octanoyl-[acyl-carrier-protein]: step 2/2. Its function is as follows. Catalyzes the radical-mediated insertion of two sulfur atoms into the C-6 and C-8 positions of the octanoyl moiety bound to the lipoyl domains of lipoate-dependent enzymes, thereby converting the octanoylated domains into lipoylated derivatives. The chain is Lipoyl synthase from Wolbachia sp. subsp. Drosophila simulans (strain wRi).